The following is a 295-amino-acid chain: Pyridoxal 5'-phosphate synthase subunit PdxS (295 aa).

D25 provides a ligand contact to D-ribose 5-phosphate. Catalysis depends on K82, which acts as the Schiff-base intermediate with D-ribose 5-phosphate. D-ribose 5-phosphate is bound at residue G154. Residue R166 participates in D-glyceraldehyde 3-phosphate binding. D-ribose 5-phosphate is bound by residues G215 and 236–237; that span reads GS.

This sequence belongs to the PdxS/SNZ family. In terms of assembly, in the presence of PdxT, forms a dodecamer of heterodimers.

The catalysed reaction is aldehydo-D-ribose 5-phosphate + D-glyceraldehyde 3-phosphate + L-glutamine = pyridoxal 5'-phosphate + L-glutamate + phosphate + 3 H2O + H(+). It functions in the pathway cofactor biosynthesis; pyridoxal 5'-phosphate biosynthesis. Catalyzes the formation of pyridoxal 5'-phosphate from ribose 5-phosphate (RBP), glyceraldehyde 3-phosphate (G3P) and ammonia. The ammonia is provided by the PdxT subunit. Can also use ribulose 5-phosphate and dihydroxyacetone phosphate as substrates, resulting from enzyme-catalyzed isomerization of RBP and G3P, respectively. This is Pyridoxal 5'-phosphate synthase subunit PdxS from Bacillus cytotoxicus (strain DSM 22905 / CIP 110041 / 391-98 / NVH 391-98).